Consider the following 745-residue polypeptide: Gamma-tubulin complex component 4 (745 aa).

This sequence belongs to the TUBGCP family. As to quaternary structure, gamma-tubulin complex is composed of gamma-tubulin and GCP proteins.

It localises to the cytoplasm. Its subcellular location is the cytoskeleton. The protein resides in the microtubule organizing center. The protein localises to the spindle. Gamma-tubulin complex is necessary for microtubule nucleation at the microtubule organizing centers (MTOCs). In terms of biological role, gamma-tubulin complex is essential for the control of microtubular network remodeling in the course of initiation and development of giant-feeding cells, and for the successful reproduction of nematodes (e.g. Meloidogyne spp.) in their plant hosts. The chain is Gamma-tubulin complex component 4 (GCP4) from Arabidopsis thaliana (Mouse-ear cress).